The sequence spans 383 residues: 1-deoxy-D-xylulose 5-phosphate reductoisomerase (383 aa).

Thr-10, Gly-11, Ser-12, Ile-13, Gly-36, Lys-37, Asn-38, and Asn-122 together coordinate NADPH. Lys-123 provides a ligand contact to 1-deoxy-D-xylulose 5-phosphate. An NADPH-binding site is contributed by Glu-124. Asp-148 contributes to the Mn(2+) binding site. 1-deoxy-D-xylulose 5-phosphate contacts are provided by Ser-149, Glu-150, Ser-174, and His-197. Glu-150 contributes to the Mn(2+) binding site. Residue Gly-203 coordinates NADPH. Residues Ser-210, Asn-215, Lys-216, and Glu-219 each coordinate 1-deoxy-D-xylulose 5-phosphate. Residue Glu-219 participates in Mn(2+) binding.

The protein belongs to the DXR family. It depends on Mg(2+) as a cofactor. The cofactor is Mn(2+).

The catalysed reaction is 2-C-methyl-D-erythritol 4-phosphate + NADP(+) = 1-deoxy-D-xylulose 5-phosphate + NADPH + H(+). The protein operates within isoprenoid biosynthesis; isopentenyl diphosphate biosynthesis via DXP pathway; isopentenyl diphosphate from 1-deoxy-D-xylulose 5-phosphate: step 1/6. Functionally, catalyzes the NADPH-dependent rearrangement and reduction of 1-deoxy-D-xylulose-5-phosphate (DXP) to 2-C-methyl-D-erythritol 4-phosphate (MEP). The protein is 1-deoxy-D-xylulose 5-phosphate reductoisomerase of Bacillus velezensis (strain DSM 23117 / BGSC 10A6 / LMG 26770 / FZB42) (Bacillus amyloliquefaciens subsp. plantarum).